Here is a 352-residue protein sequence, read N- to C-terminus: Strictosidine synthase (352 aa).

The N-terminal stretch at 1 to 31 is a signal peptide; the sequence is MANFSESKSMMAVFFMFFLLLLSSSSSSSSS. N-linked (GlcNAc...) asparagine glycans are attached at residues Asn-95 and Asn-187.

It belongs to the strictosidine synthase family. In terms of assembly, monomer.

It localises to the vacuole. The enzyme catalyses 3alpha(S)-strictosidine + H2O = secologanin + tryptamine. It participates in alkaloid biosynthesis; 3alpha(S)-strictosidine biosynthesis; 3alpha(S)-strictosidine from secologanin and tryptamine: step 1/1. Catalyzes the stereospecific condensation of tryptamine with secologanin to form strictosidine, the key intermediate of indole alkaloid biosynthesis. In Catharanthus roseus (Madagascar periwinkle), this protein is Strictosidine synthase (STR1).